A 592-amino-acid chain; its full sequence is Putative D-/L-hydantoinase subunit B (592 aa).

The protein belongs to the HyuB family. In terms of assembly, may form a complex with HyuA.

In terms of biological role, involved in the asymmetric conversion of racemic 5-substituted hydantoins to the corresponding L-amino acids. HyuA and HyuB are both required for the conversion of D- and L-5-substituted hydantoins to corresponding N-carbamoyl-D- and N-carbamoyl-L-amino acids, respectively. This is Putative D-/L-hydantoinase subunit B from Pseudomonas sp. (strain NS671).